Consider the following 90-residue polypeptide: Serine protease inhibitor Cvsi-1 (90 aa).

The first 19 residues, 1 to 19, serve as a signal peptide directing secretion; that stretch reads MDVVRTLILCVCLFGLTFA.

Contains 6 disulfide bonds. Detected in hemolymph (at protein level). In oysters collected in the summer the expression level is highest in the digestive gland with low levels of expression in gill, mantle, labial palp, style-sac midgut, gonad, heart, and hemocyte. In winter expression levels are higher in all tissues with highest expression levels observed in the digestive gland. Within the digestive gland expression is limited to the basophil cells of the digestive diverticula.

It is found in the secreted. Slow-binding inhibitor of serine proteases. The inhibitor rapidly binds to the protease forming a weak enzyme-inhibitor complex, and this is followed by a slow isomerization forming a tight-binding enzyme-inhibitor complex. Active against subtilisin A, perkinsin and trypsin with dissociation constants of 0.29 nM, 13.7 nM and 17.7 nM respectively. Not active against thermolysin, papain or pepsin. Has antiparasitic activity against the protozoan P.marinus. The polypeptide is Serine protease inhibitor Cvsi-1 (Crassostrea virginica (Eastern oyster)).